The following is a 79-amino-acid chain: UPF0291 protein SAV1341 (79 aa).

The interval 56-79 (IDPEGNDVTPEKIKEIQQKRDNKN) is disordered. Residues 64–79 (TPEKIKEIQQKRDNKN) are compositionally biased toward basic and acidic residues.

This sequence belongs to the UPF0291 family.

Its subcellular location is the cytoplasm. This Staphylococcus aureus (strain Mu50 / ATCC 700699) protein is UPF0291 protein SAV1341.